The primary structure comprises 196 residues: Imidazoleglycerol-phosphate dehydratase (196 aa).

It belongs to the imidazoleglycerol-phosphate dehydratase family.

It is found in the cytoplasm. It catalyses the reaction D-erythro-1-(imidazol-4-yl)glycerol 3-phosphate = 3-(imidazol-4-yl)-2-oxopropyl phosphate + H2O. The protein operates within amino-acid biosynthesis; L-histidine biosynthesis; L-histidine from 5-phospho-alpha-D-ribose 1-diphosphate: step 6/9. This is Imidazoleglycerol-phosphate dehydratase from Clostridium botulinum (strain Langeland / NCTC 10281 / Type F).